A 95-amino-acid polypeptide reads, in one-letter code: Small ribosomal subunit protein bS6 (95 aa).

The protein belongs to the bacterial ribosomal protein bS6 family.

In terms of biological role, binds together with bS18 to 16S ribosomal RNA. This is Small ribosomal subunit protein bS6 from Geobacillus kaustophilus (strain HTA426).